Consider the following 367-residue polypeptide: Phosphoribosylaminoimidazole-succinocarboxamide synthase (367 aa).

The protein belongs to the SAICAR synthetase family.

The enzyme catalyses 5-amino-1-(5-phospho-D-ribosyl)imidazole-4-carboxylate + L-aspartate + ATP = (2S)-2-[5-amino-1-(5-phospho-beta-D-ribosyl)imidazole-4-carboxamido]succinate + ADP + phosphate + 2 H(+). It participates in purine metabolism; IMP biosynthesis via de novo pathway; 5-amino-1-(5-phospho-D-ribosyl)imidazole-4-carboxamide from 5-amino-1-(5-phospho-D-ribosyl)imidazole-4-carboxylate: step 1/2. This chain is Phosphoribosylaminoimidazole-succinocarboxamide synthase, found in Saccharophagus degradans (strain 2-40 / ATCC 43961 / DSM 17024).